Here is a 132-residue protein sequence, read N- to C-terminus: MATPRSAKKAARKSGSKSAKCGLIFPVGRVGGMMRRGQYARRIGASGAVYLAAVLEYLTAELLELSVKAAAQSGKKRCRLNPRTVMLAARHDDDIGTLLKNVTLSHSGVVPSVSKAVAKKKGGKKGRATPSA.

The protein belongs to the histone H2A family. As to quaternary structure, the nucleosome is a histone octamer containing two molecules each of H2A, H2B, H3 and H4 assembled in one H3-H4 heterotetramer and two H2A-H2B heterodimers. The octamer wraps approximately 147 bp of DNA.

Its subcellular location is the nucleus. It localises to the chromosome. Its function is as follows. Core component of nucleosome. Nucleosomes wrap and compact DNA into chromatin, limiting DNA accessibility to the cellular machineries which require DNA as a template. Histones thereby play a central role in transcription regulation, DNA repair, DNA replication and chromosomal stability. DNA accessibility is regulated via a complex set of post-translational modifications of histones, also called histone code, and nucleosome remodeling. This chain is Histone H2A.2, found in Leishmania infantum.